The primary structure comprises 103 residues: Co-chaperonin GroES (103 aa).

The protein belongs to the GroES chaperonin family. Heptamer of 7 subunits arranged in a ring. Interacts with the chaperonin GroEL.

The protein resides in the cytoplasm. Together with the chaperonin GroEL, plays an essential role in assisting protein folding. The GroEL-GroES system forms a nano-cage that allows encapsulation of the non-native substrate proteins and provides a physical environment optimized to promote and accelerate protein folding. GroES binds to the apical surface of the GroEL ring, thereby capping the opening of the GroEL channel. The polypeptide is Co-chaperonin GroES (Gloeothece citriformis (strain PCC 7424) (Cyanothece sp. (strain PCC 7424))).